Here is a 214-residue protein sequence, read N- to C-terminus: Phosphoenolpyruvate guanylyltransferase (214 aa).

Phosphoenolpyruvate-binding residues include T139, G155, and S158.

This sequence belongs to the CofC family.

The catalysed reaction is phosphoenolpyruvate + GTP + H(+) = enolpyruvoyl-2-diphospho-5'-guanosine + diphosphate. The protein operates within cofactor biosynthesis; coenzyme F420 biosynthesis. Its function is as follows. Guanylyltransferase that catalyzes the activation of phosphoenolpyruvate (PEP) as enolpyruvoyl-2-diphospho-5'-guanosine, via the condensation of PEP with GTP. It is involved in the biosynthesis of coenzyme F420, a hydride carrier cofactor. This is Phosphoenolpyruvate guanylyltransferase from Salinispora arenicola (strain CNS-205).